Consider the following 309-residue polypeptide: Protein FdhE homolog (309 aa).

The protein belongs to the FdhE family.

It is found in the cytoplasm. Necessary for formate dehydrogenase activity. The sequence is that of Protein FdhE homolog from Pseudomonas aeruginosa (strain ATCC 15692 / DSM 22644 / CIP 104116 / JCM 14847 / LMG 12228 / 1C / PRS 101 / PAO1).